A 593-amino-acid polypeptide reads, in one-letter code: Mitoguardin 2 (593 aa).

The next 2 membrane-spanning stretches (helical) occupy residues 11-31 (MIQA…TTFG) and 42-62 (PGLR…ALAA). 2 disordered regions span residues 101 to 134 (KKGY…HSGS) and 195 to 228 (LSVG…EPES). Residues 107 to 123 (RRVQSPSSKSNDTLSGI) are compositionally biased toward polar residues. Low complexity predominate over residues 124–134 (SSIEPSKHSGS). Position 132 is a phosphoserine (serine 132). The residue at position 206 (threonine 206) is a Phosphothreonine. Serine 220, serine 224, and serine 228 each carry phosphoserine. Position 273 is a phosphothreonine (threonine 273). Phosphoserine occurs at positions 276 and 295. Residues 292 to 298 (SFFSATE) carry the FFAT motif. A helical membrane pass occupies residues 563-583 (ILLGYLGVPAASSIGLNGVLP).

The protein belongs to the mitoguardin family. As to quaternary structure, homodimer and heterodimer; forms heterodimers with MIGA1. Interacts with PLD6/MitoPLD. Interacts (via phosphorylated FFAT motif) with MOSPD2. Post-translationally, phosphorylation at Ser-295 of the FFAT motif activates interaction with MOSPD2.

The protein localises to the mitochondrion outer membrane. In terms of biological role, regulator of mitochondrial fusion: acts by forming homo- and heterodimers at the mitochondrial outer membrane and facilitating the formation of PLD6/MitoPLD dimers. May act by regulating phospholipid metabolism via PLD6/MitoPLD. The sequence is that of Mitoguardin 2 from Bos taurus (Bovine).